The chain runs to 436 residues: Histidinol dehydrogenase (436 aa).

Residues tyrosine 130, glutamine 191, and asparagine 214 each contribute to the NAD(+) site. Residues serine 237, glutamine 259, and histidine 262 each contribute to the substrate site. Residues glutamine 259 and histidine 262 each contribute to the Zn(2+) site. Residues glutamate 327 and histidine 328 each act as proton acceptor in the active site. 4 residues coordinate substrate: histidine 328, aspartate 361, glutamate 415, and histidine 420. Aspartate 361 contributes to the Zn(2+) binding site. A Zn(2+)-binding site is contributed by histidine 420.

It belongs to the histidinol dehydrogenase family. Zn(2+) serves as cofactor.

The enzyme catalyses L-histidinol + 2 NAD(+) + H2O = L-histidine + 2 NADH + 3 H(+). It functions in the pathway amino-acid biosynthesis; L-histidine biosynthesis; L-histidine from 5-phospho-alpha-D-ribose 1-diphosphate: step 9/9. Functionally, catalyzes the sequential NAD-dependent oxidations of L-histidinol to L-histidinaldehyde and then to L-histidine. In Geobacter metallireducens (strain ATCC 53774 / DSM 7210 / GS-15), this protein is Histidinol dehydrogenase.